A 419-amino-acid chain; its full sequence is L-rhamnose isomerase (419 aa).

His262, Asp294, and Asp296 together coordinate Mn(2+).

Belongs to the rhamnose isomerase family. In terms of assembly, homotetramer. The cofactor is Mn(2+).

The protein localises to the cytoplasm. It carries out the reaction L-rhamnopyranose = L-rhamnulose. It functions in the pathway carbohydrate degradation; L-rhamnose degradation; glycerone phosphate from L-rhamnose: step 1/3. In terms of biological role, catalyzes the interconversion of L-rhamnose and L-rhamnulose. The chain is L-rhamnose isomerase from Escherichia coli O81 (strain ED1a).